Reading from the N-terminus, the 535-residue chain is Proto-oncogene tyrosine-protein kinase Src (535 aa).

Positions 1 to 56 are disordered; that stretch reads MGSNKSKPKDASQRRRSLEPSENVHGAGGAFPASQTPSKPASADGHRGPSAAFVPP. Glycine 2 is lipidated: N-myristoyl glycine. The span at 7–19 shows a compositional bias: basic and acidic residues; sequence KPKDASQRRRSLE. A phosphoserine mark is found at serine 17, serine 21, and serine 74. One can recognise an SH3 domain in the interval 83–144; sequence GGVTTFVALY…PSNYVAPSDS (62 aa). The SH2 domain maps to 150-247; sequence WYFGKITRRE…GLCHRLTTVC (98 aa). Phosphotyrosine is present on tyrosine 186. The Protein kinase domain maps to 269 to 522; sequence LRLEVKLGQG…YLQAFLEDYF (254 aa). ATP is bound by residues 275–283 and lysine 297; that span reads LGQGCFGEV. Aspartate 388 (proton acceptor) is an active-site residue. At tyrosine 418 the chain carries Phosphotyrosine; by autocatalysis. A Phosphotyrosine; by FAK2 modification is found at tyrosine 418. The residue at position 529 (tyrosine 529) is a Phosphotyrosine; by CSK.

The protein belongs to the protein kinase superfamily. Tyr protein kinase family. SRC subfamily. Part of a complex comprised of PTPRA, BCAR1, BCAR3 (via SH2 domain) and SRC; the formation of the complex is dependent on integrin mediated-tyrosine phosphorylation of PTPRA. Interacts with CDCP1, TGFB1I1 and TOM1L2. Interacts with DDEF1/ASAP1 via its SH3 domain. Interacts with CCPG1. Interacts with the cytoplasmic domain of MUC1, phosphorylates it and increases binding of MUC1 with beta-catenin. Interacts with RALGPS1 via its SH3 domain. Interacts with CAV2 (tyrosine phosphorylated form). Interacts (via the SH3 domain and the protein kinase domain) with ARRB1; the interaction is independent of the phosphorylation state of SRC C-terminus. Interacts with FCAMR and PXN. Interacts with ARRB2. Interacts with ARRB1. Interacts with SRCIN1. Interacts with NDFIP2 and more weakly with NDFIP1. Interacts with PIK3CA and/or PIK3C2B, PTK2/FAK1, ESR1 (dimethylated on arginine) and FAK. Interacts (via SH2 and SH3 domain) with TNK2. Interacts (via protein kinase domain) with the tyrosine phosphorylated form of RUNX3 (via runt domain). Interacts with TRAF3 (via RING-type zinc finger domain). Interacts with RIGI, MAVS and TBK1. Interacts (via SH2 domain) with RACK1; the interaction is enhanced by tyrosine phosphorylation of RACK1 and inhibits SRC activity. Interacts (via SH2 domain) with the 'Tyr-402' phosphorylated form of PTK2B/PYK2. Interacts (via SH2 domain) with FLT3 (tyrosine phosphorylated). Identified in a complex containing FGFR4, NCAM1, CDH2, PLCG1, FRS2, SRC, SHC1, GAP43 and CTTN. Interacts with EPHB1; activates the MAPK/ERK cascade to regulate cell migration. Interacts with ERBB2 and STAT1. Interacts with PDGFRA (tyrosine phosphorylated). Interacts with CSF1R. Interacts (via SH2 domain) with the 'Tyr-9' phosphorylated form of PDPK1. Interacts with DDR2. Interacts with AMOTL2; this interaction regulates the translocation of phosphorylated SRC to peripheral cell-matrix adhesion sites. Interacts with DDR1 and DAB2. Interacts with TRAP1. Interacts with CBLC; the interaction is enhanced when SRC is phosphorylated at 'Tyr-424'. Interacts with ARHGEF5. Interacts (via cytoplasmic domain) with CEACAM1 (via SH2 domain); this interaction is regulated by trans-homophilic cell adhesion. Interacts with MPP2. Interacts with PRR7. Interacts (via kinase domain and to a lesser extent the SH2 domain) directly with PDLIM4; this interaction results in PTPN13-mediated dephosphorylation of this protein leading to its inactivation. Interacts with P85 (PIK3R1 or PIK3R2). Interacts with HNRNPA2B1. Interacts with IL6ST/gp130. Interacts (via SH3 domain) with PELP1 in the presence of 17-beta-estradiol. Interacts with AMBRA1. In terms of processing, myristoylated at Gly-2, and this is essential for targeting to membranes. Dephosphorylated at Tyr-529 by PTPRJ. Phosphorylated on Tyr-529 by c-Src kinase (CSK). The phosphorylated form is termed pp60c-src. Dephosphorylated by PTPRJ at Tyr-418. Normally maintained in an inactive conformation with the SH2 domain engaged with Tyr-529, the SH3 domain engaged with the SH2-kinase linker, and Tyr-418 dephosphorylated. Dephosphorylation of Tyr-529 as a result of protein tyrosine phosphatase (PTP) action disrupts the intramolecular interaction between the SH2 domain and Tyr-529, Tyr-418 can then become autophosphorylated, resulting in SRC activation. Phosphorylation of Tyr-529 by CSK allows this interaction to reform, resulting in SRC inactivation. CDK5-mediated phosphorylation at Ser-74 targets SRC to ubiquitin-dependent degradation and thus leads to cytoskeletal reorganization. Phosphorylated by PTK2/FAK1; this enhances kinase activity. Phosphorylated by PTK2B/PYK2; this enhances kinase activity. Upon activation of IL6ST by IL6, Tyr-418 is phosphorylated and Tyr-529 dephosphorylated. Post-translationally, displays reduced levels of autophosphorylation at Tyr-418 compared to isoform 2. In terms of processing, displays enhanced levels of autophosphorylation at Tyr-418 compared to isoform 1. S-nitrosylation is important for activation of its kinase activity. Post-translationally, ubiquitinated in response to CDK5-mediated phosphorylation. Ubiquitination mediated by CBLC requires SRC autophosphorylation at Tyr-418 and may lead to lysosomal degradation.

The protein resides in the cell membrane. Its subcellular location is the mitochondrion inner membrane. It localises to the nucleus. It is found in the cytoplasm. The protein localises to the cytoskeleton. The protein resides in the perinuclear region. Its subcellular location is the cell junction. It localises to the focal adhesion. The catalysed reaction is L-tyrosyl-[protein] + ATP = O-phospho-L-tyrosyl-[protein] + ADP + H(+). With respect to regulation, phosphorylation by CSK at Tyr-529 inhibits kinase activity. Inhibitory phosphorylation at Tyr-529 is enhanced by heme. Further phosphorylation by CDK1 partially reactivates CSK-inactivated SRC and facilitates complete reactivation by protein tyrosine phosphatase PTPRC. Integrin engagement stimulates kinase activity. Phosphorylation by PTK2/FAK1 enhances kinase activity. Butein and pseudosubstrate-based peptide inhibitors like CIYKYYF act as inhibitors. Phosphorylation at Tyr-418 increases kinase activity. In terms of biological role, non-receptor protein tyrosine kinase which is activated following engagement of many different classes of cellular receptors including immune response receptors, integrins and other adhesion receptors, receptor protein tyrosine kinases, G protein-coupled receptors as well as cytokine receptors. Participates in signaling pathways that control a diverse spectrum of biological activities including gene transcription, immune response, cell adhesion, cell cycle progression, apoptosis, migration, and transformation. Due to functional redundancy between members of the SRC kinase family, identification of the specific role of each SRC kinase is very difficult. SRC appears to be one of the primary kinases activated following engagement of receptors and plays a role in the activation of other protein tyrosine kinase (PTK) families. Receptor clustering or dimerization leads to recruitment of SRC to the receptor complexes where it phosphorylates the tyrosine residues within the receptor cytoplasmic domains. Plays an important role in the regulation of cytoskeletal organization through phosphorylation of specific substrates such as AFAP1. Phosphorylation of AFAP1 allows the SRC SH2 domain to bind AFAP1 and to localize to actin filaments. Cytoskeletal reorganization is also controlled through the phosphorylation of cortactin (CTTN). When cells adhere via focal adhesions to the extracellular matrix, signals are transmitted by integrins into the cell resulting in tyrosine phosphorylation of a number of focal adhesion proteins, including PTK2/FAK1 and paxillin (PXN). In addition to phosphorylating focal adhesion proteins, SRC is also active at the sites of cell-cell contact adherens junctions and phosphorylates substrates such as beta-catenin (CTNNB1), delta-catenin (CTNND1), and plakoglobin (JUP). Another type of cell-cell junction, the gap junction, is also a target for SRC, which phosphorylates connexin-43 (GJA1). SRC is implicated in regulation of pre-mRNA-processing and phosphorylates RNA-binding proteins such as KHDRBS1. Phosphorylates PKP3 at 'Tyr-195' in response to reactive oxygen species, which may cause the release of PKP3 from desmosome cell junctions into the cytoplasm. Also plays a role in PDGF-mediated tyrosine phosphorylation of both STAT1 and STAT3, leading to increased DNA binding activity of these transcription factors. Involved in the RAS pathway through phosphorylation of RASA1 and RASGRF1. Plays a role in EGF-mediated calcium-activated chloride channel activation. Required for epidermal growth factor receptor (EGFR) internalization through phosphorylation of clathrin heavy chain (CLTC and CLTCL1) at 'Tyr-1477'. Involved in beta-arrestin (ARRB1 and ARRB2) desensitization through phosphorylation and activation of GRK2, leading to beta-arrestin phosphorylation and internalization. Has a critical role in the stimulation of the CDK20/MAPK3 mitogen-activated protein kinase cascade by epidermal growth factor. Might be involved not only in mediating the transduction of mitogenic signals at the level of the plasma membrane but also in controlling progression through the cell cycle via interaction with regulatory proteins in the nucleus. Plays an important role in osteoclastic bone resorption in conjunction with PTK2B/PYK2. Both the formation of a SRC-PTK2B/PYK2 complex and SRC kinase activity are necessary for this function. Recruited to activated integrins by PTK2B/PYK2, thereby phosphorylating CBL, which in turn induces the activation and recruitment of phosphatidylinositol 3-kinase to the cell membrane in a signaling pathway that is critical for osteoclast function. Promotes energy production in osteoclasts by activating mitochondrial cytochrome C oxidase. Phosphorylates DDR2 on tyrosine residues, thereby promoting its subsequent autophosphorylation. Phosphorylates RUNX3 and COX2 on tyrosine residues, TNK2 on 'Tyr-284' and CBL on 'Tyr-738'. Enhances RIGI-elicited antiviral signaling. Phosphorylates PDPK1 at 'Tyr-9', 'Tyr-373' and 'Tyr-376'. Phosphorylates BCAR1 at 'Tyr-226'. Phosphorylates CBLC at multiple tyrosine residues, phosphorylation at 'Tyr-341' activates CBLC E3 activity. Phosphorylates synaptic vesicle protein synaptophysin (SYP). Involved in anchorage-independent cell growth. Required for podosome formation. Mediates IL6 signaling by activating YAP1-NOTCH pathway to induce inflammation-induced epithelial regeneration. Phosphorylates OTUB1, promoting deubiquitination of RPTOR. Non-receptor protein tyrosine kinase which phosphorylates synaptophysin with high affinity. Its function is as follows. Non-receptor protein tyrosine kinase which shows higher basal kinase activity than isoform 1, possibly due to weakened intramolecular interactions which enhance autophosphorylation of Tyr-418 and subsequent activation. The SH3 domain shows reduced affinity with the linker sequence between the SH2 and kinase domains which may account for the increased basal activity. Displays altered substrate specificity compared to isoform 1, showing weak affinity for synaptophysin and for peptide substrates containing class I or class II SH3 domain-binding motifs. Plays a role in L1CAM-mediated neurite elongation, possibly by acting downstream of L1CAM to drive cytoskeletal rearrangements involved in neurite outgrowth. The polypeptide is Proto-oncogene tyrosine-protein kinase Src (Mus musculus (Mouse)).